The following is a 554-amino-acid chain: MATDMSQGELIHPKALPLIVGAQLIHADKLGEKAEDTTMPIRRAVNSTRETPPKSKLAEGEEEKPEPDGSSEESISTVEEQENETPPATSSEAEQPKGEPESGEKEENNNKSAEEPKKDEKDQSKEKEKKVKKTIPAWATLSASQLARAQRQTPMASSPRPKMDAILTEAIKACFQKTGASVVAIRKYIIHKYPSLGLERRGYLLKQALKRELNRGVIRQVKGKGASGSFVVVQKSKPPQKSKNRKKGSALDPEPQVKLEDVLPLAFTRLCEPKEASYSLIRKYVSQYYPKLRVDIRPQLLKNALQRAVERGQLEQITGKGASGTFQLKKSGEKPLLGGSLMEYAILSAIAAMNEPKTCSTTALKKYVLENHPGANSNYQMHLLKKTLQKCEKNGWLEQISGKGFSGTFQLSFPYYPSPGVLFPKKESGGSDDEDEDDDDDESSEDSEDEEPPPKRSLQKKTPAKSQGKTASMKQRGSKPARKVPAAQRGKVRPLPKKAPPKAKTPARKARPSPSVIKKPSGSSSRKPIASARKEAKLPGKGKSAMKKSFKTKK.

The residue at position 2 (alanine 2) is an N-acetylalanine. Serine 6 is subject to Phosphoserine. Disordered regions lie at residues 30–136 (LGEK…KTIP) and 142–161 (SASQ…SPRP). A Phosphothreonine modification is found at threonine 51. Acidic residues predominate over residues 60–71 (GEEEKPEPDGSS). Lysine 64 participates in a covalent cross-link: Glycyl lysine isopeptide (Lys-Gly) (interchain with G-Cter in SUMO2). Phosphothreonine is present on residues glutamate 72 and threonine 85. Over residues 72-93 (EESISTVEEQENETPPATSSEA) the composition is skewed to polar residues. A compositionally biased stretch (basic and acidic residues) spans 94 to 129 (EQPKGEPESGEKEENNNKSAEEPKKDEKDQSKEKEK). Lysine 97 participates in a covalent cross-link: Glycyl lysine isopeptide (Lys-Gly) (interchain with G-Cter in SUMO2). The segment covering 142-156 (SASQLARAQRQTPMA) has biased composition (polar residues). A phosphoserine mark is found at serine 144, serine 157, and serine 158. The 76-residue stretch at 159–234 (PRPKMDAILT…GASGSFVVVQ (76 aa)) folds into the H15 1 domain. The residue at position 192 (lysine 192) is an N6-acetyllysine. The tract at residues 229–254 (SFVVVQKSKPPQKSKNRKKGSALDPE) is disordered. Positions 238-248 (PPQKSKNRKKG) are enriched in basic residues. A Phosphoserine modification is found at serine 249. Positions 255 to 259 (PQVKL) match the PxVxL motif motif. 2 consecutive H15 domains span residues 255-330 (PQVK…QLKK) and 337-413 (LGGS…QLSF). Lysine 258 is covalently cross-linked (Glycyl lysine isopeptide (Lys-Gly) (interchain with G-Cter in SUMO2)). The tract at residues 420–554 (GVLFPKKESG…AMKKSFKTKK (135 aa)) is disordered. Over residues 430–451 (GSDDEDEDDDDDESSEDSEDEE) the composition is skewed to acidic residues. 3 positions are modified to phosphoserine: serine 443, serine 444, and serine 447. Residues 464–475 (AKSQGKTASMKQ) are compositionally biased toward polar residues. Composition is skewed to basic residues over residues 490-511 (GKVR…RKAR) and 544-554 (SAMKKSFKTKK).

In terms of assembly, interacts (via PxVxL motif) with CBX5 (via Trp-174).

Its subcellular location is the nucleus. The protein resides in the chromosome. Functionally, component of heterochromatin that maintains heterochromatin integrity during G1/S progression and regulates the duration of G1 phase to critically influence cell proliferative capacity. May play a role in hypoxia-induced oncogenesis. This chain is Heterochromatin protein 1-binding protein 3 (Hp1bp3), found in Mus musculus (Mouse).